Reading from the N-terminus, the 685-residue chain is Eukaryotic peptide chain release factor GTP-binding subunit (685 aa).

Disordered stretches follow at residues 1 to 34 (MSDSNQGNNQQNYQQYSQNGNQQQGNNRYQGYQA), 63 to 99 (YNPDAGYQQQYNPQGGYQQYNPQGGYQQQFNPQGGRG), and 112 to 234 (GYQA…NVTS). N-acetylserine is present on S2. The segment at 2-239 (SDSNQGNNQQ…ANVTSADALI (238 aa)) is interaction with PAB1. The interval 5-135 (NQGNNQQNYQ…LNDFQKQQKQ (131 aa)) is prion domain (PrD). Positions 117–129 (FQPQSQGMSLNDF) are enriched in polar residues. The interval 139–249 (KPKKTLKLVS…KEQEEEVDDE (111 aa)) is charged. A compositionally biased stretch (basic and acidic residues) spans 166-222 (AESDKKEEEKSAETKEPTKEPTKVEEPVKKEEKPVQTEEKTEEKSELPKVEDLKISE). Positions 223-234 (STHNTNNANVTS) are enriched in polar residues. In terms of domain architecture, tr-type G spans 258–484 (KDHVSLIFMG…YLDTMNHVDR (227 aa)). Residues 267–274 (GHVDAGKS) are G1. Residue 267 to 274 (GHVDAGKS) participates in GTP binding. The G2 stretch occupies residues 323 to 327 (GKTIE). The tract at residues 344-347 (DAPG) is G3. GTP contacts are provided by residues 406–409 (NKMD) and 449–450 (GY). Residues 406-409 (NKMD) are G4. Positions 448 to 450 (SGY) are G5. S571 is subject to Phosphoserine.

Belongs to the TRAFAC class translation factor GTPase superfamily. Classic translation factor GTPase family. ERF3 subfamily. As to quaternary structure, heterodimer of two subunits, one of which binds GTP. Interacts with polyadenylate-binding protein PAB1, and TPA1.

The protein resides in the cytoplasm. It catalyses the reaction GTP + H2O = GDP + phosphate + H(+). Its function is as follows. GTPase component of the eRF1-eRF3-GTP ternary complex, a ternary complex that mediates translation termination in response to the termination codons UAA, UAG and UGA. SUP35/eRF3 mediates SUP45/eRF1 delivery to stop codons: The eRF1-eRF3-GTP complex binds to a stop codon in the ribosomal A-site. GTP hydrolysis by SUP35/eRF3 induces a conformational change that leads to its dissociation, permitting SUP45/eRF1 to accommodate fully in the A-site. Recruited by polyadenylate-binding protein PAB1 to poly(A)-tails of mRNAs. Interaction with PAB1 is also required for regulation of normal mRNA decay through translation termination-coupled poly(A) shortening. The sequence is that of Eukaryotic peptide chain release factor GTP-binding subunit (SUP35) from Saccharomyces cerevisiae (strain ATCC 204508 / S288c) (Baker's yeast).